We begin with the raw amino-acid sequence, 551 residues long: Medium/long-chain-fatty-acid--CoA/3-oxocholest-4-en-26-oate--CoA ligase (551 aa).

ATP-binding positions include 172–180 (TGGTTGFPK), aspartate 417, arginine 432, and lysine 523.

It belongs to the ATP-dependent AMP-binding enzyme family.

The catalysed reaction is a medium-chain fatty acid + ATP + CoA = a medium-chain fatty acyl-CoA + AMP + diphosphate. It catalyses the reaction a long-chain fatty acid + ATP + CoA = a long-chain fatty acyl-CoA + AMP + diphosphate. The enzyme catalyses (25S)-3-oxocholest-4-en-26-oate + ATP + CoA = (25S)-3-oxocholest-4-en-26-oyl-CoA + AMP + diphosphate. It participates in lipid metabolism; fatty acid biosynthesis. Its pathway is steroid metabolism; cholesterol metabolism. Functionally, plays an essential role in degradation of the side chains of C-24 branched-chain sterols. Not essential for degradation of straight chain sterols such as cholesterol. Catalyzes the activation of medium/long-chain fatty acids as acyl-coenzyme A (acyl-CoA), which are then transferred to the multifunctional polyketide synthase (PKS) type III for further chain extension. May be involved in the degradation of cholesterol via the degradation of the side chains of C-24 branched-chain sterols. This is Medium/long-chain-fatty-acid--CoA/3-oxocholest-4-en-26-oate--CoA ligase from Mycolicibacterium smegmatis (strain ATCC 700084 / mc(2)155) (Mycobacterium smegmatis).